Reading from the N-terminus, the 179-residue chain is Stathmin-2 (179 aa).

The segment at 1 to 26 (MAKTAMAYKEKMKELSMLSLICSCFY) is membrane attachment. Serine 16 bears the Phosphoserine mark. S-palmitoyl cysteine attachment occurs at residues cysteine 22 and cysteine 24. Positions 38-179 (DDMEVKQINK…NKELQVELSG (142 aa)) constitute an SLD domain. A regulatory/phosphorylation domain region spans residues 39–96 (DMEVKQINKRASGQAFELILKPPSPISEAPRTLASPKKKDLSLEEIQKKLEAAEERRK). Phosphoserine occurs at positions 50, 62, 73, and 97. Residues 75–179 (KKKDLSLEEI…NKELQVELSG (105 aa)) are a coiled coil.

This sequence belongs to the stathmin family. Interacts with MAPK8. Interacts with ITM2C. Interacts with KIFBP. Interacts (via the N-terminal region) with CIB1 (via C-terminal region); the interaction is direct, occurs in a calcium-dependent manner and attenuates the neurite outgrowth inhibition of STMN2. Sumoylated. Post-translationally, phosphorylated mostly by MAPK8, but also by MAPK9 and MAPK10 in the developing brain cortex. In terms of processing, N-terminal palmitoylation promotes specific anchoring to the cytosolic leaflet of Golgi membranes and subsequent vesicular trafficking along dendrites and axons. Neuronal Stathmins are substrates for palmitoyltransferases ZDHHC3, ZDHHC7 and ZDHHC15. As to expression, neuron specific.

Its subcellular location is the cytoplasm. It localises to the perinuclear region. The protein resides in the cell projection. It is found in the growth cone. The protein localises to the membrane. Its subcellular location is the axon. It localises to the golgi apparatus. The protein resides in the endosome. It is found in the lamellipodium. Regulator of microtubule stability. When phosphorylated by MAPK8, stabilizes microtubules and consequently controls neurite length in cortical neurons. In the developing brain, negatively regulates the rate of exit from multipolar stage and retards radial migration from the ventricular zone. The sequence is that of Stathmin-2 (STMN2) from Homo sapiens (Human).